We begin with the raw amino-acid sequence, 292 residues long: tRNA pseudouridine synthase B (292 aa).

Catalysis depends on aspartate 38, which acts as the Nucleophile.

It belongs to the pseudouridine synthase TruB family. Type 1 subfamily.

The catalysed reaction is uridine(55) in tRNA = pseudouridine(55) in tRNA. Responsible for synthesis of pseudouridine from uracil-55 in the psi GC loop of transfer RNAs. The sequence is that of tRNA pseudouridine synthase B from Streptococcus pneumoniae serotype 4 (strain ATCC BAA-334 / TIGR4).